We begin with the raw amino-acid sequence, 362 residues long: CLIP domain-containing serine protease B10 (362 aa).

The first 19 residues, 1–19, serve as a signal peptide directing secretion; that stretch reads MAKVVDCVLLLAFIAVVRG. Residues 22–75 enclose the Clip domain; it reads ACRTPDHRDGVCHPVQQCPSVRDEFFNSDRVLSEDEIDYLRKLQCKTKDVTICC. 3 disulfides stabilise this stretch: C23–C74, C33–C66, and C39–C75. Residues 110–361 enclose the Peptidase S1 domain; it reads IIGGNYTAID…YLDWIRQNIR (252 aa). N114 is a glycosylation site (N-linked (GlcNAc...) asparagine). A disulfide bridge connects residues C140 and C156. Active-site charge relay system residues include H155 and D220. N254 is a glycosylation site (N-linked (GlcNAc...) asparagine). 2 disulfides stabilise this stretch: C285–C300 and C310–C337. S314 serves as the catalytic Charge relay system.

The protein belongs to the peptidase S1 family. CLIP subfamily. Forms a covalent heterodimer with SRPN2; the interaction inhibits CLIPB10 catalytic activity. Cleaved by an unknown protease into an active form.

Its subcellular location is the secreted. With respect to regulation, inhibited by serpin SRPN2. Its function is as follows. Serine protease which preferentially cleaves after arginine residues. Involved in the innate immune response against parasite P.bergei infection by activating the melanization cascade. Probably in the hemolymph, cleaves and activates prophenoloxidase (PPO), which functions in the formation of pigments such as melanin and other polyphenolic compounds. In the susceptible strain G3, appears to be dispensable for ookinete elimination which occurs by lysis. This chain is CLIP domain-containing serine protease B10, found in Anopheles gambiae (African malaria mosquito).